Here is a 586-residue protein sequence, read N- to C-terminus: Arginine--tRNA ligase (586 aa).

Residues 131-141 (ANPTGPMHVGH) carry the 'HIGH' region motif.

The protein belongs to the class-I aminoacyl-tRNA synthetase family. Monomer.

It localises to the cytoplasm. The enzyme catalyses tRNA(Arg) + L-arginine + ATP = L-arginyl-tRNA(Arg) + AMP + diphosphate. The chain is Arginine--tRNA ligase from Xanthobacter autotrophicus (strain ATCC BAA-1158 / Py2).